Consider the following 528-residue polypeptide: Chromosomal replication initiator protein DnaA (528 aa).

A domain I, interacts with DnaA modulators region spans residues Met-1 to Ala-104. A disordered region spans residues Ala-93 to Glu-159. Positions Ala-104–Glu-123 are enriched in basic and acidic residues. The segment at Pro-105–Asn-187 is domain II. Residues Thr-149–Glu-159 show a composition bias toward acidic residues. The interval Ser-188–Ala-404 is domain III, AAA+ region. ATP-binding residues include Gly-232, Gly-234, Lys-235, and Thr-236. The tract at residues Ser-405–Arg-528 is domain IV, binds dsDNA.

It belongs to the DnaA family. As to quaternary structure, oligomerizes as a right-handed, spiral filament on DNA at oriC.

The protein resides in the cytoplasm. Functionally, plays an essential role in the initiation and regulation of chromosomal replication. ATP-DnaA binds to the origin of replication (oriC) to initiate formation of the DNA replication initiation complex once per cell cycle. Binds the DnaA box (a 9 base pair repeat at the origin) and separates the double-stranded (ds)DNA. Forms a right-handed helical filament on oriC DNA; dsDNA binds to the exterior of the filament while single-stranded (ss)DNA is stabiized in the filament's interior. The ATP-DnaA-oriC complex binds and stabilizes one strand of the AT-rich DNA unwinding element (DUE), permitting loading of DNA polymerase. After initiation quickly degrades to an ADP-DnaA complex that is not apt for DNA replication. Binds acidic phospholipids. This Rhodococcus opacus (strain B4) protein is Chromosomal replication initiator protein DnaA.